A 101-amino-acid chain; its full sequence is NADH-quinone oxidoreductase subunit K (101 aa).

3 helical membrane passes run 4-24, 30-50, and 62-82; these read LGHMLALGAVLFAISLAGIFL, IVLLMSIELMLLSVNINFVGF, and FVFFILTVAAAEAAIGLAILV.

The protein belongs to the complex I subunit 4L family. In terms of assembly, NDH-1 is composed of 14 different subunits. Subunits NuoA, H, J, K, L, M, N constitute the membrane sector of the complex.

It localises to the cell inner membrane. It carries out the reaction a quinone + NADH + 5 H(+)(in) = a quinol + NAD(+) + 4 H(+)(out). Its function is as follows. NDH-1 shuttles electrons from NADH, via FMN and iron-sulfur (Fe-S) centers, to quinones in the respiratory chain. The immediate electron acceptor for the enzyme in this species is believed to be ubiquinone. Couples the redox reaction to proton translocation (for every two electrons transferred, four hydrogen ions are translocated across the cytoplasmic membrane), and thus conserves the redox energy in a proton gradient. The protein is NADH-quinone oxidoreductase subunit K of Stenotrophomonas maltophilia (strain K279a).